We begin with the raw amino-acid sequence, 560 residues long: MAGPTEAETGLAEPRALCAQRGHRTYARRWVFLLAISLLNCSNATLWLSFAPVADVIAEDLVLSMEQINWLSLVYLVVSTPFGVAAIWILDSVGLRAATILGAWLNFAGSVLRMVPCMVVGTQNPFAFLMGGQSLCALAQSLVIFSPAKLAALWFPEHQRATANMLATMSNPLGVLVANVLSPVLVKKGEDIPLMLGVYTIPAGVVCLLSTICLWESVPPTPPSAGAASSTSEKFLDGLKLQLMWNKAYVILAVCLGGMIGISASFSALLEQILCASGHSSGFSGLCGALFITFGILGALALGPYVDRTKHFTEATKIGLCLFSLACVPFALVSQLQGQTLALAATCSLLGLFGFSVGPVAMELAVECSFPVGEGAATGMIFVLGQAEGILIMLAMTALTVRRSEPSLSTCQQGEDPLDWTVSLLLMAGLCTFFSCILAVFFHTPYRRLQAESGEPPSTRNAVGGADSGPGVDRGGAGRAGVLGPSTATPECTARGASLEDPRGPGSPHPACHRATPRAQGPAATDAPSRPGRLAGRVQASRFIDPAGSHSSFSSPWVIT.

12 consecutive transmembrane segments (helical) span residues 30 to 50 (WVFLLAISLLNCSNATLWLSF), 70 to 90 (WLSLVYLVVSTPFGVAAIWIL), 100 to 120 (ILGAWLNFAGSVLRMVPCMVV), 125 to 145 (PFAFLMGGQSLCALAQSLVIF), 166 to 186 (LATMSNPLGVLVANVLSPVLV), 192 to 212 (IPLMLGVYTIPAGVVCLLSTI), 250 to 270 (VILAVCLGGMIGISASFSALL), 282 to 302 (GFSGLCGALFITFGILGALAL), 318 to 338 (IGLCLFSLACVPFALVSQLQG), 341 to 361 (LALAATCSLLGLFGFSVGPVA), 379 to 399 (GMIFVLGQAEGILIMLAMTAL), and 422 to 442 (VSLLLMAGLCTFFSCILAVFF). Residues 451-540 (AESGEPPSTR…PGRLAGRVQA (90 aa)) are disordered. The span at 466-481 (ADSGPGVDRGGAGRAG) shows a compositional bias: gly residues.

The protein belongs to the major facilitator superfamily.

The protein localises to the membrane. The polypeptide is Solute carrier family 49 member A3 (Homo sapiens (Human)).